We begin with the raw amino-acid sequence, 257 residues long: Kallikrein-1 (257 aa).

Residues 1–18 (MWFLVLCLALSLGGTGRA) form the signal peptide. Residues 19-24 (PPIQSR) constitute a propeptide, activation peptide. Residues 25–254 (IVGGWECSQP…YVKWIEDTIA (230 aa)) form the Peptidase S1 domain. Disulfide bonds link Cys-31/Cys-169, Cys-47/Cys-63, Cys-148/Cys-215, Cys-180/Cys-194, and Cys-205/Cys-230. The Charge relay system role is filled by His-62. Ser-90 is a glycosylation site (O-linked (GalNAc...) serine). N-linked (GlcNAc...) asparagine glycosylation is present at Asn-99. Ser-101 is a glycosylation site (O-linked (GalNAc...) serine). Asn-105 is a glycosylation site (N-linked (GlcNAc...) asparagine). The active-site Charge relay system is Asp-116. Asn-160 carries an N-linked (GlcNAc...) asparagine glycan. Ser-162 carries an O-linked (GalNAc...) serine glycan. Ser-209 (charge relay system) is an active-site residue.

This sequence belongs to the peptidase S1 family. Kallikrein subfamily.

It catalyses the reaction Preferential cleavage of Arg-|-Xaa bonds in small molecule substrates. Highly selective action to release kallidin (lysyl-bradykinin) from kininogen involves hydrolysis of Met-|-Xaa or Leu-|-Xaa.. Its function is as follows. Glandular kallikreins cleave Met-Lys and Arg-Ser bonds in kininogen to release Lys-bradykinin. The protein is Kallikrein-1 (KLK1) of Macaca fascicularis (Crab-eating macaque).